The following is a 239-amino-acid chain: MKLTVLALAAMMGVGGMAASVQAAEVPEGPHVVTSGTASVDAVPDMATLTFQVNASAKDAAVAKSQVDQRVAKYFDFLKRNGIDPQDISAANLYTMPEYEYQKDGKSQLKGYRAVRTVQVTLRQLDKLNSLLDGALKANLNEIRSVELGVAKPEVYRDKARQMAIRNAISQAESLAQGFGVTLGPVYSVRYHVSNFQPEPETRMYAAAPSANQTSAAQTYEQQTIHFDDRVEVVFNLSK.

This is an uncharacterized protein from Edwardsiella ictaluri (strain 93-146).